The sequence spans 597 residues: Leukocyte immunoglobulin-like receptor subfamily B member 2 (597 aa).

A signal peptide spans 1 to 21 (MTPIVTVLICLGLSLGPRTRV). At 22 to 460 (QTGTIPKPTL…QSGLGRHLGV (439 aa)) the chain is on the extracellular side. Ig-like C2-type domains follow at residues 27–110 (PKPT…SELS), 111–229 (DPLV…SLSV), 230–318 (QPGP…ILIT), and 330–419 (QPGP…LVVS). 4 disulfides stabilise this stretch: C49–C98, C144–C196, C156–C166, and C245–C296. 3 N-linked (GlcNAc...) asparagine glycosylation sites follow: N280, N301, and N340. Cysteines 345 and 396 form a disulfide. The interval 417-451 (VVSGPSMGSSPPPTGPISTPGPEDQPLTPTGSDPQ) is disordered. Residues 461 to 481 (VIGILVAVVLLLLLLLLLFLI) form a helical membrane-spanning segment. The Cytoplasmic segment spans residues 482–597 (LRHRRQGKHW…PSIYATLAIH (116 aa)). Residues 491–523 (WTSTQRKADFQHPAGAVGPEPTDRGLQWRSSPA) are disordered. Short sequence motifs (ITIM motif) lie at residues 530-535 (NLYAAV), 559-564 (VTYAQL), and 589-594 (SIYATL). A disordered region spans residues 537–597 (DTQPEDGVEM…PSIYATLAIH (61 aa)).

In terms of assembly, binds PTPN6 when phosphorylated. Binds FCGR1A. Interacts with peptide-bound HLA-G-B2M; this interaction is direct. Interacts with peptide-bound HLA-F-B2M; this interaction is direct. In terms of processing, phosphorylated on tyrosine residues. Dephosphorylated by PTPN6. Expressed in monocytes and at lower levels in myeloid and plasmacytoid dendritic cells. Expressed in tolerogenic IL10-producing dendritic cells. Expressed in myeloid-derived suppressor cells during pregnancy. Detected at low levels in natural killer (NK) cells. Expressed in B cells.

Its subcellular location is the cell membrane. Receptor for class I MHC antigens. Recognizes a broad spectrum of HLA-A, HLA-B, HLA-C, HLA-G and HLA-F alleles. Involved in the down-regulation of the immune response and the development of tolerance. Recognizes HLA-G in complex with B2M/beta-2 microglobulin and a nonamer self-peptide (peptide-bound HLA-G-B2M) triggering differentiation of type 1 regulatory T cells and myeloid-derived suppressor cells, both of which actively maintain maternal-fetal tolerance. Competes with CD8A for binding to class I MHC antigens. Inhibits FCGR1A-mediated phosphorylation of cellular proteins and mobilization of intracellular calcium ions. The chain is Leukocyte immunoglobulin-like receptor subfamily B member 2 from Homo sapiens (Human).